The primary structure comprises 640 residues: UvrABC system protein C (640 aa).

The GIY-YIG domain occupies 35 to 113 (DAPGVYRMIG…IKQLKPRFNV (79 aa)). The region spanning 223–258 (RAVMATMAKAMEEAAEELEFERAARLRDRIRALSAV) is the UVR domain.

Belongs to the UvrC family. As to quaternary structure, interacts with UvrB in an incision complex.

The protein resides in the cytoplasm. In terms of biological role, the UvrABC repair system catalyzes the recognition and processing of DNA lesions. UvrC both incises the 5' and 3' sides of the lesion. The N-terminal half is responsible for the 3' incision and the C-terminal half is responsible for the 5' incision. This Caulobacter vibrioides (strain ATCC 19089 / CIP 103742 / CB 15) (Caulobacter crescentus) protein is UvrABC system protein C.